Reading from the N-terminus, the 63-residue chain is Bowman-birk type proteinase inhibitor 2 (63 aa).

Cystine bridges form between Cys-7–Cys-61, Cys-8–Cys-23, Cys-11–Cys-57, Cys-13–Cys-21, Cys-31–Cys-38, Cys-35–Cys-50, and Cys-40–Cys-48.

Belongs to the Bowman-Birk serine protease inhibitor family. As to quaternary structure, exists as a dimer in its native form.

Inhibits trypsin, chymotrypsin, plasmin and factor XIIa. Does not inhibit factor Xa, thrombin, human plasma kallikrein, porcine pancreatic kallikrein and human urinary kallikrein. This is Bowman-birk type proteinase inhibitor 2 from Amburana cearensis (Cerejeira).